A 131-amino-acid polypeptide reads, in one-letter code: Small ribosomal subunit protein uS11 (131 aa).

The protein belongs to the universal ribosomal protein uS11 family. As to quaternary structure, part of the 30S ribosomal subunit. Interacts with proteins S7 and S18. Binds to IF-3.

Located on the platform of the 30S subunit, it bridges several disparate RNA helices of the 16S rRNA. Forms part of the Shine-Dalgarno cleft in the 70S ribosome. The polypeptide is Small ribosomal subunit protein uS11 (Helicobacter pylori (strain ATCC 700392 / 26695) (Campylobacter pylori)).